The sequence spans 249 residues: Microvitellogenin (249 aa).

Positions 1 to 17 are cleaved as a signal peptide; the sequence is MLRTTVVLLTLAAIAFA.

Functionally, small vitellogenic protein found in females. It is synthesized in the fat body, secreted into the hemolymph, and taken up by developing oocytes. In Manduca sexta (Tobacco hawkmoth), this protein is Microvitellogenin (MVG).